Here is a 293-residue protein sequence, read N- to C-terminus: Shikimate dehydrogenase (NADP(+)) (293 aa).

Residues 26–28 (SKS) and T73 contribute to the shikimate site. K77 serves as the catalytic Proton acceptor. D89 contacts NADP(+). Shikimate-binding residues include N98 and D113. NADP(+) is bound by residues 137 to 141 (GAGGA), 161 to 166 (NRTKQR), and I231. Y233 provides a ligand contact to shikimate. G254 is an NADP(+) binding site.

It belongs to the shikimate dehydrogenase family. Homodimer.

It carries out the reaction shikimate + NADP(+) = 3-dehydroshikimate + NADPH + H(+). Its pathway is metabolic intermediate biosynthesis; chorismate biosynthesis; chorismate from D-erythrose 4-phosphate and phosphoenolpyruvate: step 4/7. Its function is as follows. Involved in the biosynthesis of the chorismate, which leads to the biosynthesis of aromatic amino acids. Catalyzes the reversible NADPH linked reduction of 3-dehydroshikimate (DHSA) to yield shikimate (SA). This Bartonella henselae (strain ATCC 49882 / DSM 28221 / CCUG 30454 / Houston 1) (Rochalimaea henselae) protein is Shikimate dehydrogenase (NADP(+)).